The sequence spans 279 residues: Formamidopyrimidine-DNA glycosylase (279 aa).

Proline 2 (schiff-base intermediate with DNA) is an active-site residue. Glutamate 3 acts as the Proton donor in catalysis. Lysine 58 functions as the Proton donor; for beta-elimination activity in the catalytic mechanism. DNA-binding residues include histidine 92, arginine 111, and arginine 153. The FPG-type zinc finger occupies 238–272; the sequence is TVYGKEGQSCLSCSSTIIKTKHSGRSTFYCKTCQY. Arginine 262 serves as the catalytic Proton donor; for delta-elimination activity.

This sequence belongs to the FPG family. In terms of assembly, monomer. Zn(2+) serves as cofactor.

The catalysed reaction is Hydrolysis of DNA containing ring-opened 7-methylguanine residues, releasing 2,6-diamino-4-hydroxy-5-(N-methyl)formamidopyrimidine.. It catalyses the reaction 2'-deoxyribonucleotide-(2'-deoxyribose 5'-phosphate)-2'-deoxyribonucleotide-DNA = a 3'-end 2'-deoxyribonucleotide-(2,3-dehydro-2,3-deoxyribose 5'-phosphate)-DNA + a 5'-end 5'-phospho-2'-deoxyribonucleoside-DNA + H(+). In terms of biological role, involved in base excision repair of DNA damaged by oxidation or by mutagenic agents. Acts as a DNA glycosylase that recognizes and removes damaged bases. Has a preference for oxidized purines, such as 7,8-dihydro-8-oxoguanine (8-oxoG). Has AP (apurinic/apyrimidinic) lyase activity and introduces nicks in the DNA strand. Cleaves the DNA backbone by beta-delta elimination to generate a single-strand break at the site of the removed base with both 3'- and 5'-phosphates. The chain is Formamidopyrimidine-DNA glycosylase from Rickettsia massiliae (strain Mtu5).